The sequence spans 522 residues: Maturase K (522 aa).

It belongs to the intron maturase 2 family. MatK subfamily.

Its subcellular location is the plastid. The protein localises to the chloroplast. Functionally, usually encoded in the trnK tRNA gene intron. Probably assists in splicing its own and other chloroplast group II introns. The protein is Maturase K of Iris orientalis (Yellowband iris).